The primary structure comprises 1105 residues: Probable diguanylate cyclase DgcE (1105 aa).

The next 10 helical transmembrane spans lie at 9–29 (LIAL…SFIF), 38–58 (QFGT…VAFY), 64–84 (MWPG…ILLF), 88–108 (SLNM…AVLL), 127–147 (LALG…VLLT), 156–176 (FLIW…LGLL), 190–207 (LLFE…LSWL), 211–228 (YLPW…WSAV), 236–256 (FLIF…DPSL), and 270–290 (WLPF…MYAF). The PAS 1 domain maps to 300–370 (SETHFRNAME…QQVEKLISGE (71 aa)). PAC domains lie at 374-426 (YSME…VNQQ) and 501-552 (FKLE…ALFQ). One can recognise a PAS 2 domain in the interval 553-623 (EKERLHITLD…LMENIYSADT (71 aa)). A PAC 3 domain is found at 626-680 (SAIEQDVVLHCRSGGSYDVHYSITPLSTLDGSNIGSVLVIQDVTESRKMLRQLSY). The GGDEF domain occupies 712–845 (QRHALVFIDL…GRGRVTVYEP (134 aa)). Residue Asp720 coordinates Mg(2+). Residues Asn728, His733, and Asp737 each coordinate substrate. Asp763 serves as a coordination point for Mg(2+). Asp763 functions as the Proton acceptor in the catalytic mechanism. Position 783 (Arg783) interacts with substrate. The region spanning 855–1104 (AAMSLDEQWR…LLVNSSYFAI (250 aa)) is the EAL domain.

In terms of assembly, homodimer. The cofactor is Mg(2+).

The protein localises to the cell inner membrane. It catalyses the reaction 2 GTP = 3',3'-c-di-GMP + 2 diphosphate. It functions in the pathway purine metabolism; 3',5'-cyclic di-GMP biosynthesis. Catalyzes the synthesis of cyclic-di-GMP (c-di-GMP) via the condensation of 2 GTP molecules. Involved in the control of the switch from cell motility to adhesion via regulation of cellular levels of c-di-GMP. Part of a signaling cascade that regulates curli biosynthesis. The cascade is composed of two c-di-GMP control modules, in which c-di-GMP controlled by the DgcE/PdeH pair (module I) regulates the activity of the DgcM/PdeR pair (module II), which in turn regulates activity of the transcription factor MlrA and expression of the master biofilm regulator csgD. This chain is Probable diguanylate cyclase DgcE, found in Escherichia coli (strain K12).